The primary structure comprises 194 residues: dCTP deaminase, dUMP-forming (194 aa).

DCTP contacts are provided by residues 104–109, Asp-122, 130–132, Gln-151, Tyr-165, Lys-172, and Gln-176; these read RSSLGR and TLE. Glu-132 functions as the Proton donor/acceptor in the catalytic mechanism.

This sequence belongs to the dCTP deaminase family. In terms of assembly, homotrimer.

It carries out the reaction dCTP + 2 H2O = dUMP + NH4(+) + diphosphate. It functions in the pathway pyrimidine metabolism; dUMP biosynthesis; dUMP from dCTP: step 1/1. Bifunctional enzyme that catalyzes both the deamination of dCTP to dUTP and the hydrolysis of dUTP to dUMP without releasing the toxic dUTP intermediate. This Dictyoglomus thermophilum (strain ATCC 35947 / DSM 3960 / H-6-12) protein is dCTP deaminase, dUMP-forming.